The primary structure comprises 61 residues: Small ribosomal subunit protein uS14 (61 aa).

Positions 24, 27, 40, and 43 each coordinate Zn(2+).

It belongs to the universal ribosomal protein uS14 family. Zinc-binding uS14 subfamily. As to quaternary structure, part of the 30S ribosomal subunit. Contacts proteins S3 and S10. Requires Zn(2+) as cofactor.

Its function is as follows. Binds 16S rRNA, required for the assembly of 30S particles and may also be responsible for determining the conformation of the 16S rRNA at the A site. The protein is Small ribosomal subunit protein uS14 of Clostridium botulinum (strain ATCC 19397 / Type A).